Reading from the N-terminus, the 427-residue chain is Serine protease HTRA2, mitochondrial (427 aa).

Residues 33–57 are disordered; sequence HTASSSKGSGGDNSKDQENNGQNKS. The chain crosses the membrane as a helical span at residues 67–87; the sequence is VFQFCVPFSLGALVSAVLIEG. Positions 78 to 81 match the IAP-binding motif; sequence ALVS. The segment at 144-307 is serine protease; the sequence is SNGSGFVIEQ…IPIDYVKVFL (164 aa). Active-site charge relay system residues include His162, Asp194, and Ser271. The region spanning 330–415 is the PDZ domain; it reads MGITMLTLTP…DLEIVILRGV (86 aa).

The protein belongs to the peptidase S1C family. In terms of assembly, interacts with th/DIAP1 (via BIR 2 domain).

The protein resides in the mitochondrion intermembrane space. It localises to the mitochondrion membrane. The enzyme catalyses Cleavage of non-polar aliphatic amino-acids at the P1 position, with a preference for Val, Ile and Met. At the P2 and P3 positions, Arg is selected most strongly with a secondary preference for other hydrophilic residues.. Functionally, serine protease that shows proteolytic activity against a non-specific substrate beta-casein. Promotes or induces cell death either by direct binding to and inhibition of BIRC proteins (also called inhibitor of apoptosis proteins, IAPs), leading to an increase in caspase activity, or by a BIRC inhibition-independent, caspase-independent and serine protease activity-dependent mechanism. Can antagonize antiapoptotic activity of th/Diap1 by directly inducing the degradation of th/Diap1. The protein is Serine protease HTRA2, mitochondrial of Drosophila persimilis (Fruit fly).